A 60-amino-acid chain; its full sequence is Pepsin-3 (60 aa).

Residues 1–35 constitute a propeptide, activation peptide; that stretch reads INVPLTRHKSMRESLREKGIELPYQDPAIKYRPEF.

Belongs to the peptidase A1 family.

This chain is Pepsin-3, found in Thunnus orientalis (North Pacific bluefin tuna).